Here is a 718-residue protein sequence, read N- to C-terminus: Kinesin-2a (718 aa).

The Kinesin motor domain maps to 5 to 335; the sequence is NIKVIVRCRP…LRYADRAKQI (331 aa). An ATP-binding site is contributed by 97–104; sequence GQTGAGKT. ADP is bound by residues glycine 100, glycine 102, lysine 103, threonine 104, and tryptophan 105. Threonine 104 contacts Mg(2+). A coiled-coil region spans residues 432–477; the sequence is SRKAADELEAKRRALAEAKQKRESELEQKEALNKEAIVTLTDLKSQ.

The protein belongs to the TRAFAC class myosin-kinesin ATPase superfamily. Kinesin family. Kinesin II subfamily. In terms of assembly, monomer.

The protein localises to the cell projection. It localises to the cilium. It is found in the flagellum. The protein resides in the cytoplasm. Its subcellular location is the cytoskeleton. The protein localises to the flagellum axoneme. It localises to the flagellum basal body. In terms of biological role, involved in anterograde intraflagellar transport (IFT). Involved in flagellar assembly. The polypeptide is Kinesin-2a (Giardia intestinalis (strain ATCC 50803 / WB clone C6) (Giardia lamblia)).